The chain runs to 925 residues: Eukaryotic translation initiation factor 3 subunit A (925 aa).

A disordered region spans residues Gln108–Glu127. Residues Asp112–Gln121 are compositionally biased toward basic and acidic residues. Residues Phe324 to Phe498 form the PCI domain. Disordered stretches follow at residues Pro509 to Asn544 and Lys839 to Gly925. 2 coiled-coil regions span residues Glu534–Leu666 and Ser785–Ser885. Residues Lys839–Asn880 are compositionally biased toward basic and acidic residues. Over residues Arg916 to Gly925 the composition is skewed to basic residues.

It belongs to the eIF-3 subunit A family. Component of the eukaryotic translation initiation factor 3 (eIF-3) complex.

The protein localises to the cytoplasm. Functionally, RNA-binding component of the eukaryotic translation initiation factor 3 (eIF-3) complex, which is involved in protein synthesis of a specialized repertoire of mRNAs and, together with other initiation factors, stimulates binding of mRNA and methionyl-tRNAi to the 40S ribosome. The eIF-3 complex specifically targets and initiates translation of a subset of mRNAs involved in cell proliferation. This Kluyveromyces lactis (strain ATCC 8585 / CBS 2359 / DSM 70799 / NBRC 1267 / NRRL Y-1140 / WM37) (Yeast) protein is Eukaryotic translation initiation factor 3 subunit A.